The following is a 484-amino-acid chain: Major extracellular endoglucanase (484 aa).

Residues M1 to S25 form the signal peptide. Catalysis depends on E182, which acts as the Proton donor. E303 (nucleophile) is an active-site residue. The segment at G370–S402 is disordered. Positions T375–P399 are thr-Pro repeats ('hinge') (Pro-Thr box). Positions T378–T398 are enriched in pro residues. Positions P395–S484 constitute a CBM2 domain.

Belongs to the glycosyl hydrolase 5 (cellulase A) family.

It catalyses the reaction Endohydrolysis of (1-&gt;4)-beta-D-glucosidic linkages in cellulose, lichenin and cereal beta-D-glucans.. This Xanthomonas campestris pv. campestris (strain ATCC 33913 / DSM 3586 / NCPPB 528 / LMG 568 / P 25) protein is Major extracellular endoglucanase (engXCA).